Here is a 265-residue protein sequence, read N- to C-terminus: Apolipoprotein A-I (265 aa).

An N-terminal signal peptide occupies residues 1 to 16 (MKAAVLIWLFLMGSQA). A run of 2 repeats spans residues 66-87 (LKLL…EQLG) and 88-109 (PVTQ…QEMS). A 10 X approximate tandem repeats region spans residues 66-265 (LKLLDNWDSL…EEYTKKLSSQ (200 aa)). M108 is subject to Methionine sulfoxide. A 3; half-length repeat occupies 110–120 (KDLEEVKAQVQ). A run of 5 repeats spans residues 121-142 (PYLD…QKLE), 143-164 (PLRT…EKLS), 165-186 (PLAE…TQLA), 187-208 (PYSD…ENSG), and 209-230 (ASLA…EKAK). M134 is modified (methionine sulfoxide). The stretch at 231-241 (PALDDLRQGLL) is one 9; half-length repeat. Residues 242–265 (PVLESFKVSFLSALEEYTKKLSSQ) form repeat 10.

Belongs to the apolipoprotein A1/A4/E family. In terms of assembly, homodimer. Interacts with APOA1BP and CLU. Component of a sperm activating protein complex (SPAP), consisting of APOA1, an immunoglobulin heavy chain, an immunoglobulin light chain and albumin. Interacts with NDRG1. Interacts with SCGB3A2. Interacts with NAXE and YJEFN3. Post-translationally, glycosylated. Palmitoylated. In terms of processing, phosphorylation sites are present in the extracellular medium.

Its subcellular location is the secreted. In terms of biological role, participates in the reverse transport of cholesterol from tissues to the liver for excretion by promoting cholesterol efflux from tissues and by acting as a cofactor for the lecithin cholesterol acyltransferase (LCAT). As part of the SPAP complex, activates spermatozoa motility. This Aotus nancymaae (Ma's night monkey) protein is Apolipoprotein A-I (APOA1).